A 201-amino-acid chain; its full sequence is Glycerol-3-phosphate acyltransferase (201 aa).

The next 4 helical transmembrane spans lie at Ile-4–Leu-24, Glu-84–Phe-104, Val-116–Ala-136, and Ala-157–Val-177.

This sequence belongs to the PlsY family. As to quaternary structure, probably interacts with PlsX.

It is found in the cell inner membrane. The catalysed reaction is an acyl phosphate + sn-glycerol 3-phosphate = a 1-acyl-sn-glycero-3-phosphate + phosphate. The protein operates within lipid metabolism; phospholipid metabolism. In terms of biological role, catalyzes the transfer of an acyl group from acyl-phosphate (acyl-PO(4)) to glycerol-3-phosphate (G3P) to form lysophosphatidic acid (LPA). This enzyme utilizes acyl-phosphate as fatty acyl donor, but not acyl-CoA or acyl-ACP. In Laribacter hongkongensis (strain HLHK9), this protein is Glycerol-3-phosphate acyltransferase.